Here is a 138-residue protein sequence, read N- to C-terminus: Small ribosomal subunit protein uS11c (138 aa).

Residues 1–24 (MTKPIPRIGSRRNGRIGSRKSGRR) are disordered. Basic residues predominate over residues 9-24 (GSRRNGRIGSRKSGRR).

The protein belongs to the universal ribosomal protein uS11 family. As to quaternary structure, part of the 30S ribosomal subunit.

It localises to the plastid. It is found in the chloroplast. This chain is Small ribosomal subunit protein uS11c, found in Liriodendron tulipifera (Tuliptree).